We begin with the raw amino-acid sequence, 153 residues long: Regulatory protein RecX (153 aa).

Belongs to the RecX family.

The protein resides in the cytoplasm. Its function is as follows. Modulates RecA activity. The protein is Regulatory protein RecX of Neisseria meningitidis serogroup C / serotype 2a (strain ATCC 700532 / DSM 15464 / FAM18).